Reading from the N-terminus, the 278-residue chain is Putative phosphoenolpyruvate synthase regulatory protein (278 aa).

Position 157 to 164 (glycine 157 to threonine 164) interacts with ADP.

The protein belongs to the pyruvate, phosphate/water dikinase regulatory protein family. PSRP subfamily.

The enzyme catalyses [pyruvate, water dikinase] + ADP = [pyruvate, water dikinase]-phosphate + AMP + H(+). It catalyses the reaction [pyruvate, water dikinase]-phosphate + phosphate + H(+) = [pyruvate, water dikinase] + diphosphate. In terms of biological role, bifunctional serine/threonine kinase and phosphorylase involved in the regulation of the phosphoenolpyruvate synthase (PEPS) by catalyzing its phosphorylation/dephosphorylation. In Vibrio parahaemolyticus serotype O3:K6 (strain RIMD 2210633), this protein is Putative phosphoenolpyruvate synthase regulatory protein.